Here is a 165-residue protein sequence, read N- to C-terminus: NADPH-dependent 7-cyano-7-deazaguanine reductase (165 aa).

The segment at 1–24 is disordered; sequence MTTRSTDQTEHLRALGQKTPYPAA. The active-site Thioimide intermediate is C56. D63 (proton donor) is an active-site residue. Substrate-binding positions include 78 to 80 and 97 to 98; these read VES and ME.

The protein belongs to the GTP cyclohydrolase I family. QueF type 1 subfamily.

It is found in the cytoplasm. It carries out the reaction 7-aminomethyl-7-carbaguanine + 2 NADP(+) = 7-cyano-7-deazaguanine + 2 NADPH + 3 H(+). The protein operates within tRNA modification; tRNA-queuosine biosynthesis. Functionally, catalyzes the NADPH-dependent reduction of 7-cyano-7-deazaguanine (preQ0) to 7-aminomethyl-7-deazaguanine (preQ1). The chain is NADPH-dependent 7-cyano-7-deazaguanine reductase from Nitratidesulfovibrio vulgaris (strain ATCC 29579 / DSM 644 / CCUG 34227 / NCIMB 8303 / VKM B-1760 / Hildenborough) (Desulfovibrio vulgaris).